We begin with the raw amino-acid sequence, 447 residues long: Signal recognition particle 54 kDa protein (447 aa).

Residues 105-112 (GVQGSGKT), 187-191 (DTAGR), and 247-250 (TKMD) contribute to the GTP site.

Belongs to the GTP-binding SRP family. SRP54 subfamily. In terms of assembly, part of the signal recognition particle protein translocation system, which is composed of SRP and FtsY. Archaeal SRP consists of a 7S RNA molecule of 300 nucleotides and two protein subunits: SRP54 and SRP19.

Its subcellular location is the cytoplasm. It carries out the reaction GTP + H2O = GDP + phosphate + H(+). Involved in targeting and insertion of nascent membrane proteins into the cytoplasmic membrane. Binds to the hydrophobic signal sequence of the ribosome-nascent chain (RNC) as it emerges from the ribosomes. The SRP-RNC complex is then targeted to the cytoplasmic membrane where it interacts with the SRP receptor FtsY. This Hyperthermus butylicus (strain DSM 5456 / JCM 9403 / PLM1-5) protein is Signal recognition particle 54 kDa protein.